A 160-amino-acid polypeptide reads, in one-letter code: Putative pre-16S rRNA nuclease (160 aa).

The protein belongs to the YqgF nuclease family.

It is found in the cytoplasm. Its function is as follows. Could be a nuclease involved in processing of the 5'-end of pre-16S rRNA. The chain is Putative pre-16S rRNA nuclease from Rhodopseudomonas palustris (strain ATCC BAA-98 / CGA009).